We begin with the raw amino-acid sequence, 381 residues long: Anhydro-N-acetylmuramic acid kinase (381 aa).

22–29 (GTSIDGID) lines the ATP pocket.

The protein belongs to the anhydro-N-acetylmuramic acid kinase family.

It carries out the reaction 1,6-anhydro-N-acetyl-beta-muramate + ATP + H2O = N-acetyl-D-muramate 6-phosphate + ADP + H(+). The protein operates within amino-sugar metabolism; 1,6-anhydro-N-acetylmuramate degradation. It participates in cell wall biogenesis; peptidoglycan recycling. Functionally, catalyzes the specific phosphorylation of 1,6-anhydro-N-acetylmuramic acid (anhMurNAc) with the simultaneous cleavage of the 1,6-anhydro ring, generating MurNAc-6-P. Is required for the utilization of anhMurNAc either imported from the medium or derived from its own cell wall murein, and thus plays a role in cell wall recycling. The protein is Anhydro-N-acetylmuramic acid kinase of Xylella fastidiosa (strain Temecula1 / ATCC 700964).